Consider the following 237-residue polypeptide: Phosphatidylserine decarboxylase proenzyme (237 aa).

The active-site Schiff-base intermediate with substrate; via pyruvic acid is Ser-206. Ser-206 is subject to Pyruvic acid (Ser); by autocatalysis.

It belongs to the phosphatidylserine decarboxylase family. PSD-A subfamily. In terms of assembly, heterodimer of a large membrane-associated beta subunit and a small pyruvoyl-containing alpha subunit. Pyruvate serves as cofactor. Post-translationally, is synthesized initially as an inactive proenzyme. Formation of the active enzyme involves a self-maturation process in which the active site pyruvoyl group is generated from an internal serine residue via an autocatalytic post-translational modification. Two non-identical subunits are generated from the proenzyme in this reaction, and the pyruvate is formed at the N-terminus of the alpha chain, which is derived from the carboxyl end of the proenzyme. The post-translation cleavage follows an unusual pathway, termed non-hydrolytic serinolysis, in which the side chain hydroxyl group of the serine supplies its oxygen atom to form the C-terminus of the beta chain, while the remainder of the serine residue undergoes an oxidative deamination to produce ammonia and the pyruvoyl prosthetic group on the alpha chain.

Its subcellular location is the cell membrane. It catalyses the reaction a 1,2-diacyl-sn-glycero-3-phospho-L-serine + H(+) = a 1,2-diacyl-sn-glycero-3-phosphoethanolamine + CO2. The protein operates within phospholipid metabolism; phosphatidylethanolamine biosynthesis; phosphatidylethanolamine from CDP-diacylglycerol: step 2/2. Its function is as follows. Catalyzes the formation of phosphatidylethanolamine (PtdEtn) from phosphatidylserine (PtdSer). This chain is Phosphatidylserine decarboxylase proenzyme, found in Rhodococcus jostii (strain RHA1).